Consider the following 519-residue polypeptide: Mannuronan C5-epimerase (519 aa).

Positions 1–25 are cleaved as a signal peptide; sequence MNLHPHLRHSLLASALLLASGLATA. PbH1 repeat units lie at residues 219-246, 281-303, 305-328, 330-352, 354-376, and 377-399; these read GTET…SISQ, TQDF…DPHD, SHRL…IVSR, VNDS…VIDR, SVNN…TLYE, and SGDN…RVRN. His302 acts as the Proton acceptor in catalysis.

It belongs to the D-mannuronate C5-epimerase family.

It localises to the periplasm. It carries out the reaction [(1-&gt;4)-beta-D-mannuronosyl](n) = [alginate](n). Its pathway is glycan biosynthesis; alginate biosynthesis. Functionally, catalyzes the epimerization of beta-D-mannuronate to alpha-L-guluronate during the synthesis of the linear polysaccharide alginate. In addition, is part of a periplasmic protein complex that protects alginate from degradation by AlgL by channeling the newly formed alginate polymer through a scaffold that transfers the alginate polymer through the periplasmic space to the outer membrane secretin AlgE. This is Mannuronan C5-epimerase (algG) from Pseudomonas putida (strain ATCC 47054 / DSM 6125 / CFBP 8728 / NCIMB 11950 / KT2440).